Reading from the N-terminus, the 424-residue chain is Imidazolonepropionase (424 aa).

Residues His81 and His83 each coordinate Fe(3+). Residues His81 and His83 each contribute to the Zn(2+) site. Arg90, Tyr153, and His186 together coordinate 4-imidazolone-5-propanoate. N-formimidoyl-L-glutamate is bound at residue Tyr153. Position 251 (His251) interacts with Fe(3+). Residue His251 coordinates Zn(2+). Residue Glu254 coordinates 4-imidazolone-5-propanoate. Asp325 provides a ligand contact to Fe(3+). Zn(2+) is bound at residue Asp325. Asn327 and Gly329 together coordinate N-formimidoyl-L-glutamate. Residue Thr330 participates in 4-imidazolone-5-propanoate binding.

This sequence belongs to the metallo-dependent hydrolases superfamily. HutI family. It depends on Zn(2+) as a cofactor. Requires Fe(3+) as cofactor.

The protein localises to the cytoplasm. The enzyme catalyses 4-imidazolone-5-propanoate + H2O = N-formimidoyl-L-glutamate. It participates in amino-acid degradation; L-histidine degradation into L-glutamate; N-formimidoyl-L-glutamate from L-histidine: step 3/3. Its function is as follows. Catalyzes the hydrolytic cleavage of the carbon-nitrogen bond in imidazolone-5-propanoate to yield N-formimidoyl-L-glutamate. It is the third step in the universal histidine degradation pathway. This is Imidazolonepropionase from Syntrophobacter fumaroxidans (strain DSM 10017 / MPOB).